A 64-amino-acid chain; its full sequence is Large ribosomal subunit protein bL35 (64 aa).

Belongs to the bacterial ribosomal protein bL35 family.

In Acidothermus cellulolyticus (strain ATCC 43068 / DSM 8971 / 11B), this protein is Large ribosomal subunit protein bL35.